A 607-amino-acid polypeptide reads, in one-letter code: CRS2-associated factor 2, chloroplastic (607 aa).

A disordered region spans residues 1–75 (MSPPPPQRPS…GNGGNPAFRA (75 aa)). The transit peptide at 1-79 (MSPPPPQRPS…NPAFRAPHLR (79 aa)) directs the protein to the chloroplast. CRM domains follow at residues 228–324 (EPLT…TRPR) and 346–442 (EGLT…YPKP). Positions 482–505 (KMFELWTNAIESSVALMLDDAEVD) are CRS2 binding. A disordered region spans residues 550–576 (TEDEPETGTLEPQQHEFTESSDVAEDD).

Interacts with CRS2 and RNA. Part of large ribonucleo-protein complexes that include group IIB introns, CRS2 and CAF2.

It is found in the plastid. It localises to the chloroplast stroma. In terms of biological role, required for the splicing of group IIB introns in chloroplasts. Forms splicing particles with CRS2. Interacts with RNA and confers intron specificity of the splicing particles. The protein is CRS2-associated factor 2, chloroplastic of Oryza sativa subsp. japonica (Rice).